Here is a 475-residue protein sequence, read N- to C-terminus: Glycogen synthase (475 aa).

Position 15 (K15) interacts with ADP-alpha-D-glucose.

This sequence belongs to the glycosyltransferase 1 family. Bacterial/plant glycogen synthase subfamily.

It catalyses the reaction [(1-&gt;4)-alpha-D-glucosyl](n) + ADP-alpha-D-glucose = [(1-&gt;4)-alpha-D-glucosyl](n+1) + ADP + H(+). It functions in the pathway glycan biosynthesis; glycogen biosynthesis. In terms of biological role, synthesizes alpha-1,4-glucan chains using ADP-glucose. The polypeptide is Glycogen synthase (Chlamydia caviae (strain ATCC VR-813 / DSM 19441 / 03DC25 / GPIC) (Chlamydophila caviae)).